The following is a 2021-amino-acid chain: HEAT repeat-containing protein 5A (2021 aa).

HEAT repeat units follow at residues 795–836 and 1059–1096; these read SQRP…HLAS and VNLS…REAA. Disordered regions lie at residues 1503–1528 and 1989–2012; these read EGNG…LPAD and RGNQ…HGSP. A compositionally biased stretch (polar residues) spans 1512 to 1522; the sequence is VTPTSMGQERG.

The protein belongs to the HEATR5 family.

The polypeptide is HEAT repeat-containing protein 5A (heatr5a) (Xenopus tropicalis (Western clawed frog)).